Here is a 791-residue protein sequence, read N- to C-terminus: Cytochrome c oxidase polypeptide I+III (791 aa).

Residues 1–473 (MAITAKPKAG…LLSTIGAYIL (473 aa)) form a COX1 region. A helical membrane pass occupies residues 29 to 49 (LMYTATAFFAFALAGVFSLLI). A Fe(II)-heme a-binding site is contributed by His73. 17 helical membrane-spanning segments follow: residues 78–98 (LFFFIIQAGLTGFGNFVVPLM), 111–131 (AFSYWAFLGAIVLALMSYFFP), 155–175 (FYLAAILLLGFSSLLGNANFV), 201–221 (ASVLNLFSLAGLTAATLLVLL), 244–264 (FFWFYSHPTVYVMLLPYLGIL), 282–302 (MVWAQMGIVVLGTMVWAHHMF), 312–332 (IAFAFFTALIAVPTGVKLFNI), 347–367 (LYWVLGFIFNFLLGGITGVML), 381–401 (FVVAHFHNVLMAGSGFGAFAG), 423–443 (FWLFLVGYLLTFLPQYALGYL), 464–484 (LLSTIGAYILGLGGLVWIYTM), 566–586 (FAFFVAVAALPVPNVWMWVFL), 617–637 (AWMGMAWFIVSEVGLFAILIA), 657–677 (LWLALLNTFLLVSSSFTVHFA), 691–711 (FGLLVTIILGVLFFLVQSWEF), 729–749 (FFTIVGLHGLHVVIGGFGLIL), and 771–791 (SMYWHLVDAVWLVIVTIFYVW). Residues His250, Tyr254, His299, and His300 each contribute to the Cu cation site. Positions 250–254 (HPTVY) form a cross-link, 1'-histidyl-3'-tyrosine (His-Tyr). Position 385 (His385) interacts with heme a3. His387 provides a ligand contact to Fe(II)-heme a. Positions 545–791 (DPAHIHLPNS…LVIVTIFYVW (247 aa)) are COX3.

It in the N-terminal section; belongs to the heme-copper respiratory oxidase family. This sequence in the C-terminal section; belongs to the cytochrome c oxidase subunit 3 family. As to quaternary structure, possibly a heterodimer of A-protein (contains: cytochrome c oxidase subunits I and III) and subunit II. The A-protein could also present a precursor form of subunits I and III. It depends on Cu(2+) as a cofactor. Heme is required as a cofactor.

It localises to the cell membrane. It carries out the reaction 4 Fe(II)-[cytochrome c] + O2 + 8 H(+)(in) = 4 Fe(III)-[cytochrome c] + 2 H2O + 4 H(+)(out). Its pathway is energy metabolism; oxidative phosphorylation. In terms of biological role, cytochrome c oxidase is the component of the respiratory chain that catalyzes the reduction of oxygen to water. Subunits 1-3 form the functional core of the enzyme complex. Co I is the catalytic subunit of the enzyme. Electrons originating in cytochrome c are transferred via the copper A center of subunit 2 and heme a of subunit 1 to the bimetallic center formed by heme a3 and copper B. This cytochrome c oxidase shows proton pump activity across the membrane in addition to the electron transfer. This chain is Cytochrome c oxidase polypeptide I+III (caaA), found in Thermus thermophilus (strain ATCC 27634 / DSM 579 / HB8).